The chain runs to 622 residues: Meiotic expression up-regulated protein 25 (622 aa).

The chain is Meiotic expression up-regulated protein 25 (meu25) from Schizosaccharomyces pombe (strain 972 / ATCC 24843) (Fission yeast).